We begin with the raw amino-acid sequence, 348 residues long: Mitochondrial glycine transporter (348 aa).

3 Solcar repeats span residues 10 to 94 (TKST…IREN), 130 to 214 (LSNT…SKQH), and 249 to 333 (RAAS…LIRR). Transmembrane regions (helical) follow at residues 16–41 (FVAG…TRVQ), 69–95 (GTLP…RENA), 136–161 (LLAG…VRYE), 189–212 (GFGA…EKSK), 253–279 (INFA…KTRI), and 308–326 (GLAL…AWTV).

Belongs to the mitochondrial carrier (TC 2.A.29) family. SLC25A38 subfamily.

It localises to the mitochondrion inner membrane. The enzyme catalyses glycine(in) = glycine(out). Mitochondrial glycine transporter that imports glycine into the mitochondrial matrix. Plays an important role in providing glycine for the first enzymatic step in heme biosynthesis, the condensation of glycine with succinyl-CoA to produce 5-aminolevulinate (ALA) in the mitochondrial matrix. The polypeptide is Mitochondrial glycine transporter (mic-13) (Neurospora crassa (strain ATCC 24698 / 74-OR23-1A / CBS 708.71 / DSM 1257 / FGSC 987)).